Consider the following 385-residue polypeptide: MGNWLLPEGLADVLPAEARRIEELRRELLDLYRTYGFELVAPPLVEYIDSLLSSTGSDLNLRTCKLVDQLSGRTLGVRADMTSQVTRIDAHLLNRAGVTRLCYCGSVLHARPADLLSSRELLQIGAEIYGHAGFEADLEIIQLVMDTLATAGVRNARLDLCHSGVMRAIFDADPQASRHAGDLCTLLREKDVPGLAELASRVDGLGEDTVRALQALATLYGGPEIIARARRELPAVPGMAQALDALQALVDAMPGVTLSVDLADVGGYGYHSGVTFAVYGEDWHDALVRGGRYDDVSCAFGRARPATGFSLDLRKLAAGLTPAEPARAVRAPWGQDPALTDAVRRLRRSGEIVVQVLPGHEQGLDEFVCDRELALQDGAWTVRTL.

It belongs to the class-II aminoacyl-tRNA synthetase family. HisZ subfamily. Heteromultimer composed of HisG and HisZ subunits.

The protein resides in the cytoplasm. It functions in the pathway amino-acid biosynthesis; L-histidine biosynthesis; L-histidine from 5-phospho-alpha-D-ribose 1-diphosphate: step 1/9. Functionally, required for the first step of histidine biosynthesis. May allow the feedback regulation of ATP phosphoribosyltransferase activity by histidine. The polypeptide is ATP phosphoribosyltransferase regulatory subunit (Bordetella pertussis (strain Tohama I / ATCC BAA-589 / NCTC 13251)).